Here is a 142-residue protein sequence, read N- to C-terminus: Putative pre-16S rRNA nuclease (142 aa).

It belongs to the YqgF nuclease family.

It localises to the cytoplasm. Could be a nuclease involved in processing of the 5'-end of pre-16S rRNA. This is Putative pre-16S rRNA nuclease from Prosthecochloris aestuarii (strain DSM 271 / SK 413).